A 1624-amino-acid chain; its full sequence is ATP-binding cassette sub-family A member 9 (1624 aa).

The chain crosses the membrane as a helical span at residues 31–51; sequence LLEWLFSFLLVLFLYLFFSNL. Asn120 and Asn195 each carry an N-linked (GlcNAc...) asparagine glycan. The next 6 helical transmembrane spans lie at 221 to 243, 269 to 289, 300 to 320, 329 to 349, 354 to 374, and 398 to 418; these read VATDFFIFFCIISFSTFIYYVSV, SWGLMYAGFILIMATLMALIV, FVMVFTLFLLYGLSLITLAFL, FLTGLVVFLLIVFWGILGFPA, LPAFLEWTLCLLSPFAFTVGM, and LIIATLFMLVFDTLLYLVLTL. The ABC transporter 1 domain occupies 481-716; the sequence is IRIKNLKKEY…WGIGYHLSLH (236 aa). 517–524 is an ATP binding site; the sequence is GHSGAGKT. A helical transmembrane segment spans residues 864 to 884; sequence LWTILLLFGISFIPQLLEHLF. Residue Asn949 is glycosylated (N-linked (GlcNAc...) asparagine). 6 consecutive transmembrane segments (helical) span residues 1026 to 1046, 1065 to 1085, 1108 to 1128, 1136 to 1156, 1163 to 1183, and 1200 to 1220; these read TFFWIPMAASFTPYIAMSSIG, AYWFGQALVDVSLYFLILLLM, ILCSIGYVSSLVFLTYVISFI, SGIWSFFFLIVVIFSIVATDL, GLFFGTMLIPPFTLIGSLFIF, and EIVYLALLIPYLHFLIFLFIL. An ABC transporter 2 domain is found at 1288-1521; it reads LRKEYAGKKK…FGKDYLLEMK (234 aa). 1326–1333 provides a ligand contact to ATP; that stretch reads GHNGAGKS.

It belongs to the ABC transporter superfamily. ABCA family. In terms of tissue distribution, widely expressed with higher expression in heart.

It localises to the membrane. In terms of biological role, transporter that may play a role in monocyte differentiation and lipid transport and homeostasis. The sequence is that of ATP-binding cassette sub-family A member 9 (ABCA9) from Homo sapiens (Human).